An 86-amino-acid chain; its full sequence is Trypsin inhibitor (86 aa).

Cystine bridges form between Cys8–Cys65 and Cys49–Cys58.

In terms of biological role, serine protease inhibitor which is active against trypsin. Displays strong antifungal activity against a number of phytopathogenic fungi including M.melonis, A.cucumerina, A.solani, C.glaeosporioides and P.capsici. This is Trypsin inhibitor from Fagopyrum tataricum (Tartarian buckwheat).